The chain runs to 505 residues: ATP nucleosidase Cap17 (505 aa).

A cyclic oligonucleotide sensing-domain region spans residues 1-229 (MTNTNNEYVL…RLSEIAVELL (229 aa)). Positions 239–505 (LHTPSVLILT…DYLQHGWIRA (267 aa)) are purine nucleoside phosphorylase domain.

Belongs to the Cap17 family.

It catalyses the reaction ATP + H2O = D-ribose 5-triphosphate + adenine. It carries out the reaction dATP + H2O = 2-deoxyribose 5-triphosphate + adenine. Functionally, effector protein with (d)ATP degrading activity of a CBASS antivirus system. CBASS (cyclic oligonucleotide-based antiphage signaling system) provides immunity against bacteriophage. A CD-NTase protein synthesizes cyclic nucleotides in response to infection; these serve as specific second messenger signals. The signals activate a diverse range of effectors, leading to bacterial cell death and thus abortive phage infection. A type III CBASS system. Expression of this CBASS system (Cap18-Cap6-Cap7-CdnC-CapW-Cap17) in a susceptible E.coli (strain MG1655) confers resistance to bacteriophage P1, leading to cell lysis. By 50 minutes post-infection, ATP levels are markedly reduced while dATP has been eliminated. The C-terminal purine nucleoside phosphorylase (PNP) domain cleaves the N-glycosidic bond of (d)ATP to release adenine and a sugar triphosphate; has no activity on other (d)NTPs, nor on DNA or RNA. In vivo during phage infection has pleoitropic effects on nucleotide accumulation. This protein may be activated by the cognate CD-NTase (CdnC). This Escherichia coli (strain KTE188) protein is ATP nucleosidase Cap17.